The sequence spans 1632 residues: uncharacterized protein (1632 aa).

Polar residues predominate over residues 1-15 (MSNNKQTAAPAATSN). The interval 1–23 (MSNNKQTAAPAATSNEKAENGAE) is disordered. Residues 1–63 (MSNNKQTAAP…TKDAFKGKYR (63 aa)) are Cytoplasmic-facing. The chain crosses the membrane as a helical span at residues 64-86 (VFYGNGLHTSIMFGAGTAALDLM). Residues 87–1632 (TPGSFLPPFP…ESDGEEMSGE (1546 aa)) lie on the Extracellular side of the membrane. Residues asparagine 149 and asparagine 274 are each glycosylated (N-linked (GlcNAc...) asparagine; by host). The segment at 516–538 (ELSSQLGDTDTKKEQKEKRSKQG) is disordered. N-linked (GlcNAc...) asparagine; by host glycans are attached at residues asparagine 654, asparagine 719, and asparagine 797. Positions 838–890 (IKGTKKSDDGDSKTDGSGDMEDDFTSLAKMTNRKRKAGGKDGPSKKKKKDGAD) are disordered. Composition is skewed to basic and acidic residues over residues 842-853 (KKSDDGDSKTDG) and 875-890 (GGKD…DGAD). N-linked (GlcNAc...) asparagine; by host glycans are attached at residues asparagine 1012, asparagine 1031, asparagine 1261, asparagine 1339, asparagine 1511, and asparagine 1546. Residues 1603 to 1632 (PSAMDVDEDEDEDMDDESDDESDGEEMSGE) are disordered. Acidic residues predominate over residues 1607–1632 (DVDEDEDEDMDDESDDESDGEEMSGE).

It is found in the host membrane. This is an uncharacterized protein from Ostreid herpesvirus 1 (isolate France) (OsHV-1).